Here is a 501-residue protein sequence, read N- to C-terminus: MEFSVKSGSPEKQRSACIVVGVFEPRRLTSVAEQLDEISGGYLSNLLRRGDLEGKPGQMLLLHHVPNVLSERVLLVGCGKERELDERQYKQIISKTIKTLNETGSMEAVCFLSELHVKGRDTYWRVRQAVEATQDSLYTFLQLKTKKGEPRRPLRKMVFNVPTRRELTIGERAVEHGLAVSLGSKTTRDVANMPPNICNPMYLFEQAKALEAEYENLHVDSVNEKQMDALGMHSYLAVGRGSVNESIMTIMEHKGGPADQAPIVLVGKGLTFDSGGISIKPGEAMDEMKYDMGGAAGVLGAMHTISALNLPINVVGILAGCENMPDANAYRPGDILTTMSGQTVEVLNTDAEGRLVLCDALTYVERFDPELVIDVATLTGACVIALGHHATGVFSNHNPLAHELVNASEQSGDKAWRMPLWDEYQDQLESPFADMTNLGGRPAGSITAACFLSRFTRKYNWAHMDIAGTAWVGGKEKGSTGRPVPMLSQFLMNRAGIESED.

Lys-268 and Asp-273 together coordinate Mn(2+). Lys-280 is an active-site residue. Mn(2+) is bound by residues Asp-291, Asp-350, and Glu-352. Arg-354 is an active-site residue.

It belongs to the peptidase M17 family. It depends on Mn(2+) as a cofactor.

The protein localises to the cytoplasm. It carries out the reaction Release of an N-terminal amino acid, Xaa-|-Yaa-, in which Xaa is preferably Leu, but may be other amino acids including Pro although not Arg or Lys, and Yaa may be Pro. Amino acid amides and methyl esters are also readily hydrolyzed, but rates on arylamides are exceedingly low.. It catalyses the reaction Release of an N-terminal amino acid, preferentially leucine, but not glutamic or aspartic acids.. Functionally, presumably involved in the processing and regular turnover of intracellular proteins. Catalyzes the removal of unsubstituted N-terminal amino acids from various peptides. The protein is Probable cytosol aminopeptidase of Pseudoalteromonas atlantica (strain T6c / ATCC BAA-1087).